Here is a 1091-residue protein sequence, read N- to C-terminus: Error-prone DNA polymerase 1 (1091 aa).

The span at 1051–1064 shows a compositional bias: basic and acidic residues; the sequence is RGDEFHHGMPDDHR. Residues 1051-1080 are disordered; the sequence is RGDEFHHGMPDDHRAIRKRPPPSNHDDDEV.

It belongs to the DNA polymerase type-C family. DnaE2 subfamily.

The protein localises to the cytoplasm. The enzyme catalyses DNA(n) + a 2'-deoxyribonucleoside 5'-triphosphate = DNA(n+1) + diphosphate. Functionally, DNA polymerase involved in damage-induced mutagenesis and translesion synthesis (TLS). It is not the major replicative DNA polymerase. The polypeptide is Error-prone DNA polymerase 1 (Agrobacterium fabrum (strain C58 / ATCC 33970) (Agrobacterium tumefaciens (strain C58))).